Reading from the N-terminus, the 221-residue chain is Octanoyltransferase (221 aa).

The BPL/LPL catalytic domain maps to 35-221; sequence ESYENRIIFC…RELLAALLSK (187 aa). Substrate contacts are provided by residues 80 to 87, 152 to 154, and 165 to 167; these read RGGDITYH, AIG, and GLA. The active-site Acyl-thioester intermediate is the cysteine 183.

The protein belongs to the LipB family.

It localises to the cytoplasm. The enzyme catalyses octanoyl-[ACP] + L-lysyl-[protein] = N(6)-octanoyl-L-lysyl-[protein] + holo-[ACP] + H(+). The protein operates within protein modification; protein lipoylation via endogenous pathway; protein N(6)-(lipoyl)lysine from octanoyl-[acyl-carrier-protein]: step 1/2. Functionally, catalyzes the transfer of endogenously produced octanoic acid from octanoyl-acyl-carrier-protein onto the lipoyl domains of lipoate-dependent enzymes. Lipoyl-ACP can also act as a substrate although octanoyl-ACP is likely to be the physiological substrate. The chain is Octanoyltransferase from Bacteroides fragilis (strain ATCC 25285 / DSM 2151 / CCUG 4856 / JCM 11019 / LMG 10263 / NCTC 9343 / Onslow / VPI 2553 / EN-2).